Reading from the N-terminus, the 381-residue chain is Homoserine O-succinyltransferase (381 aa).

An AB hydrolase-1 domain is found at 45–360; it reads NAVLVCHALN…PHGHDAFLLD (316 aa). The Nucleophile role is filled by Ser-151. Arg-221 is a substrate binding site. Catalysis depends on residues Asp-321 and His-354. Residue Asp-355 coordinates substrate.

Belongs to the AB hydrolase superfamily. MetX family. Homodimer.

It localises to the cytoplasm. The catalysed reaction is L-homoserine + succinyl-CoA = O-succinyl-L-homoserine + CoA. It participates in amino-acid biosynthesis; L-methionine biosynthesis via de novo pathway; O-succinyl-L-homoserine from L-homoserine: step 1/1. Transfers a succinyl group from succinyl-CoA to L-homoserine, forming succinyl-L-homoserine. This Burkholderia thailandensis (strain ATCC 700388 / DSM 13276 / CCUG 48851 / CIP 106301 / E264) protein is Homoserine O-succinyltransferase.